A 567-amino-acid chain; its full sequence is Urease subunit alpha (567 aa).

In terms of domain architecture, Urease spans 129–567 (GGIDTHIHWI…LPMAQRYFLF (439 aa)). Ni(2+) contacts are provided by histidine 134, histidine 136, and lysine 217. Lysine 217 bears the N6-carboxylysine mark. Substrate is bound at residue histidine 219. Histidine 246 and histidine 272 together coordinate Ni(2+). The active-site Proton donor is the histidine 320. Aspartate 360 contacts Ni(2+).

It belongs to the metallo-dependent hydrolases superfamily. Urease alpha subunit family. Heterotrimer of UreA (gamma), UreB (beta) and UreC (alpha) subunits. Three heterotrimers associate to form the active enzyme. The apoenzyme interacts with an accessory complex composed of UreD, UreF and UreG, which is required for the assembly of the nickel containing metallocenter of UreC. The UreE protein may also play a direct role as a metallochaperone in nickel transfer to the urease apoprotein. It depends on Ni cation as a cofactor. Carboxylation allows a single lysine to coordinate two nickel ions.

It localises to the cytoplasm. The catalysed reaction is urea + 2 H2O + H(+) = hydrogencarbonate + 2 NH4(+). The protein operates within nitrogen metabolism; urea degradation; CO(2) and NH(3) from urea (urease route): step 1/1. With respect to regulation, the apoenzyme can be activated in vitro in the presence of nickel ions and carbon dioxide, which promotes carboxylation of Lys-217. This is Urease subunit alpha from Klebsiella aerogenes (Enterobacter aerogenes).